The chain runs to 185 residues: Thymidine kinase (185 aa).

Residues Gly-7–Thr-14 and Asp-83–Gln-86 contribute to the ATP site. Glu-84 (proton acceptor) is an active-site residue. Cys-139, Cys-142, Cys-177, and His-180 together coordinate Zn(2+).

Belongs to the thymidine kinase family. As to quaternary structure, homotetramer.

The protein resides in the cytoplasm. It catalyses the reaction thymidine + ATP = dTMP + ADP + H(+). The polypeptide is Thymidine kinase (Pyrobaculum aerophilum (strain ATCC 51768 / DSM 7523 / JCM 9630 / CIP 104966 / NBRC 100827 / IM2)).